We begin with the raw amino-acid sequence, 345 residues long: Protein RecA (345 aa).

ATP is bound at residue 80–87; the sequence is GPESSGKT.

The protein belongs to the RecA family.

It is found in the cytoplasm. Its function is as follows. Can catalyze the hydrolysis of ATP in the presence of single-stranded DNA, the ATP-dependent uptake of single-stranded DNA by duplex DNA, and the ATP-dependent hybridization of homologous single-stranded DNAs. It interacts with LexA causing its activation and leading to its autocatalytic cleavage. The sequence is that of Protein RecA from Mycoplasma mycoides subsp. mycoides SC (strain CCUG 32753 / NCTC 10114 / PG1).